We begin with the raw amino-acid sequence, 352 residues long: Respiratory nitrate reductase subunit beta (352 aa).

The 4Fe-4S ferredoxin-type 1 domain occupies 20–48; the sequence is VAMVMDLNKCIGCQTCTVACKSLWTEGGG. Positions 29, 32, 35, and 39 each coordinate [4Fe-4S] cluster. Disordered regions lie at residues 63 to 95 and 111 to 131; these read KGYP…KEDY and SDRP…DEDQ. Positions 78 to 95 are enriched in basic and acidic residues; it reads SSEHKERKPGQIPDKEDY. 4Fe-4S ferredoxin-type domains follow at residues 139-170 and 172-201; these read SYYF…KREE and GIVL…YNAT. Positions 148, 151, and 156 each coordinate [4Fe-4S] cluster. The [3Fe-4S] cluster site is built by Cys-160, Cys-181, and Cys-187. [4Fe-4S] cluster is bound by residues Cys-191, Cys-208, Cys-211, Cys-229, and Cys-233.

In terms of assembly, probable multiprotein complex; a catalytic heterodimer of an alpha and beta chain is proposed to associate with additional subunits involved in membrane attachment and electron transfer. It depends on [4Fe-4S] cluster as a cofactor. Requires [3Fe-4S] cluster as cofactor.

The protein resides in the cell membrane. It carries out the reaction nitrate + a quinol = a quinone + nitrite + H2O. With respect to regulation, inhibited by cyanide, azide and antimycin A. Enzyme stability is not dependent on salt concentration. Functionally, the respiratory membrane-bound nitrate reductase enzyme complex plays a role in generation of metabolic energy by using nitrate as a terminal electron acceptor during anaerobic conditions. The beta chain is an electron transfer unit containing four cysteine clusters involved in the formation of iron-sulfur centers. The protein is Respiratory nitrate reductase subunit beta (narH) of Haloferax mediterranei (strain ATCC 33500 / DSM 1411 / JCM 8866 / NBRC 14739 / NCIMB 2177 / R-4) (Halobacterium mediterranei).